We begin with the raw amino-acid sequence, 218 residues long: Probable nicotinate-nucleotide adenylyltransferase (218 aa).

The protein belongs to the NadD family.

It catalyses the reaction nicotinate beta-D-ribonucleotide + ATP + H(+) = deamido-NAD(+) + diphosphate. Its pathway is cofactor biosynthesis; NAD(+) biosynthesis; deamido-NAD(+) from nicotinate D-ribonucleotide: step 1/1. Functionally, catalyzes the reversible adenylation of nicotinate mononucleotide (NaMN) to nicotinic acid adenine dinucleotide (NaAD). The sequence is that of Probable nicotinate-nucleotide adenylyltransferase from Acidithiobacillus ferrooxidans (strain ATCC 23270 / DSM 14882 / CIP 104768 / NCIMB 8455) (Ferrobacillus ferrooxidans (strain ATCC 23270)).